The following is a 114-amino-acid chain: Non-specific lipid-transfer protein 2 (114 aa).

The signal sequence occupies residues Met-1–Glu-23. Cystine bridges form between Cys-27–Cys-73, Cys-37–Cys-50, Cys-51–Cys-96, and Cys-71–Cys-110.

It belongs to the plant LTP family.

Its function is as follows. Plant non-specific lipid-transfer proteins transfer phospholipids as well as galactolipids across membranes. May play a role in wax or cutin deposition in the cell walls of expanding epidermal cells and certain secretory tissues. This chain is Non-specific lipid-transfer protein 2, found in Solanum chilense (Tomato).